We begin with the raw amino-acid sequence, 597 residues long: MAYNKIPPRWLNCPRRGQPVAGRFLPLKTMLGPRYDSQVAEENRFHPSMLSNYLKSLKVKMSLLVDLTNTSRFYDRNDIEKEGIKYIKLQCKGHGECPTTENTETFIRLCERFNERSPPELIGVHCTHGFNRTGFLICAFLVEKMDWSIEAAVATFAQARPPGIYKGDYLKELFRRYGDIEEAPPPPVLPDWCFEDEDEEDEDEDGKKDSEPGSSASFSKRRKERLKLGAIFLEGITVKGVTQVTTQPKLGEVQQKCHQFCGWEGSGFPGAQPVSMDKQNIRLLEQKPYKVSWKADGTRYMMLIDGTNEVFMIDRDNSVFHVSNLEFPFRKDLRMHLSNTLLDGEMIIDKVNGQAVPRYLIYDIIKFNAQPVGDCDFNIRLQCIEREIISPRHEKMKTGLIDKTQEPFSVRPKQFFDINISRKLLEGNFAKEVSHEMDGLIFQPIGKYKPGRCDDILKWKPPSLNSVDFRLKITRMGGEGLLPQNVGLLYVGGYERPFAQIKVTKELKQYDNKIIECKFENNSWVFMRQRIDKSFPNAYNTAMAVCNSISNPVTKEMLFEFIDRCAAAAQGQKRKYPLDPDTELMPPPPPKRLHRPT.

Residues 1–212 (MAYNKIPPRW…DEDGKKDSEP (212 aa)) are TPase. Residues 25 to 183 (LPLKTMLGPR…FRRYGDIEEA (159 aa)) enclose the Tyrosine-protein phosphatase domain. Cysteine 126 (phosphocysteine intermediate) is an active-site residue. The disordered stretch occupies residues 181–221 (EEAPPPPVLPDWCFEDEDEEDEDEDGKKDSEPGSSASFSKR). Residues 193 to 204 (CFEDEDEEDEDE) are compositionally biased toward acidic residues. The GTase stretch occupies residues 229–597 (GAIFLEGITV…PPPKRLHRPT (369 aa)). Lysine 294 (N6-GMP-lysine intermediate) is an active-site residue. GTP-binding positions include arginine 299, arginine 315, 343–345 (DGE), 458–460 (KWK), and 528–533 (RQRIDK). An interaction with POLR2A region spans residues 330–386 (RKDLRMHLSNTLLDGEMIIDKVNGQAVPRYLIYDIIKFNAQPVGDCDFNIRLQCIER). The disordered stretch occupies residues 573–597 (KRKYPLDPDTELMPPPPPKRLHRPT).

In the N-terminal section; belongs to the non-receptor class of the protein-tyrosine phosphatase family. This sequence in the C-terminal section; belongs to the eukaryotic GTase family. As to quaternary structure, interacts with SUPT5H and RNMT. Interacts with POLR2A (via C-terminus); this enhances guanylyltransferase activity. Binds (via GTase domain) to the elongating phosphorylated form of RNA polymerase II; can form direct interactions with the phosphorylated POLR2A C-terminal domain and indirect interactions via bound RNA.

It localises to the nucleus. It carries out the reaction a 5'-end triphospho-ribonucleoside in mRNA + H2O = a 5'-end diphospho-ribonucleoside in mRNA + phosphate + H(+). The enzyme catalyses a 5'-end diphospho-ribonucleoside in mRNA + GTP + H(+) = a 5'-end (5'-triphosphoguanosine)-ribonucleoside in mRNA + diphosphate. RNA triphosphatase activity is inhibited by vanadate, iodoacetate and magnesium. In terms of biological role, bifunctional mRNA-capping enzyme exhibiting RNA 5'-triphosphate monophosphatase activity in the N-terminal part and mRNA guanylyltransferase activity in the C-terminal part. Catalyzes the first two steps of cap formation: by removing the gamma-phosphate from the 5'-triphosphate end of nascent mRNA to yield a diphosphate end, and by transferring the GMP moiety of GTP to the 5'-diphosphate terminus of RNA via a covalent enzyme-GMP reaction intermediate. The chain is mRNA-capping enzyme (Rngtt) from Mus musculus (Mouse).